The sequence spans 341 residues: MKTNEFDFDLPDRLIAQTPLEKRDHSRLMVLDKNKQEIVHKHFYDITDYLNPGDCLVINNTRVLPARLFGVKENTGGKMEFLLLKRIDLNTWEVLVKPGKKAKIGSRFEFGEGILKAEVLSMADEGARIVRFEYEGVFEELLDQLGKMPLPPYITEELADRERYQTVYSKHEGSSAAPTAGLHFTPELLSEIKKKGINVVSITLHVGLGTFRPVKVDSLENHEMHAEYYEITEEAAQVINDTKKAGNRVFAVGTTSCRTLESASTEKGKIEANKGWTNIFIFPGYQFKILDGLITNFHLPESTLIMLVSALLGKEKTLQAYKVAVDEQYRFFSFGDAMLIV.

Belongs to the QueA family. Monomer.

The protein resides in the cytoplasm. The catalysed reaction is 7-aminomethyl-7-carbaguanosine(34) in tRNA + S-adenosyl-L-methionine = epoxyqueuosine(34) in tRNA + adenine + L-methionine + 2 H(+). The protein operates within tRNA modification; tRNA-queuosine biosynthesis. Transfers and isomerizes the ribose moiety from AdoMet to the 7-aminomethyl group of 7-deazaguanine (preQ1-tRNA) to give epoxyqueuosine (oQ-tRNA). The protein is S-adenosylmethionine:tRNA ribosyltransferase-isomerase of Alkaliphilus metalliredigens (strain QYMF).